Consider the following 902-residue polypeptide: Probable leucine--tRNA ligase, mitochondrial (902 aa).

Position 67 is an N6-acetyllysine (lysine 67). The 'HIGH' region motif lies at 91–101 (YPSGKLHMGHV). An N6-acetyllysine modification is found at lysine 235. Positions 638–642 (KMSKS) match the 'KMSKS' region motif. An ATP-binding site is contributed by lysine 641.

It belongs to the class-I aminoacyl-tRNA synthetase family.

It localises to the mitochondrion matrix. The catalysed reaction is tRNA(Leu) + L-leucine + ATP = L-leucyl-tRNA(Leu) + AMP + diphosphate. The protein is Probable leucine--tRNA ligase, mitochondrial (Lars2) of Mus musculus (Mouse).